The sequence spans 460 residues: 3-isopropylmalate dehydratase large subunit (460 aa).

The [4Fe-4S] cluster site is built by C341, C401, and C404.

It belongs to the aconitase/IPM isomerase family. LeuC type 1 subfamily. As to quaternary structure, heterodimer of LeuC and LeuD. It depends on [4Fe-4S] cluster as a cofactor.

It catalyses the reaction (2R,3S)-3-isopropylmalate = (2S)-2-isopropylmalate. Its pathway is amino-acid biosynthesis; L-leucine biosynthesis; L-leucine from 3-methyl-2-oxobutanoate: step 2/4. In terms of biological role, catalyzes the isomerization between 2-isopropylmalate and 3-isopropylmalate, via the formation of 2-isopropylmaleate. The protein is 3-isopropylmalate dehydratase large subunit of Phocaeicola vulgatus (strain ATCC 8482 / DSM 1447 / JCM 5826 / CCUG 4940 / NBRC 14291 / NCTC 11154) (Bacteroides vulgatus).